We begin with the raw amino-acid sequence, 435 residues long: Histidinol dehydrogenase (435 aa).

Y131, Q189, and N212 together coordinate NAD(+). 3 residues coordinate substrate: S238, Q260, and H263. Residues Q260 and H263 each contribute to the Zn(2+) site. Catalysis depends on proton acceptor residues E327 and H328. H328, D361, E415, and H420 together coordinate substrate. Residue D361 participates in Zn(2+) binding. H420 lines the Zn(2+) pocket.

This sequence belongs to the histidinol dehydrogenase family. As to quaternary structure, homodimer. Zn(2+) is required as a cofactor.

It carries out the reaction L-histidinol + 2 NAD(+) + H2O = L-histidine + 2 NADH + 3 H(+). It functions in the pathway amino-acid biosynthesis; L-histidine biosynthesis; L-histidine from 5-phospho-alpha-D-ribose 1-diphosphate: step 9/9. In terms of biological role, catalyzes the sequential NAD-dependent oxidations of L-histidinol to L-histidinaldehyde and then to L-histidine. The sequence is that of Histidinol dehydrogenase from Buchnera aphidicola subsp. Baizongia pistaciae (strain Bp).